The sequence spans 242 residues: tRNA (guanine-N(1)-)-methyltransferase (242 aa).

S-adenosyl-L-methionine is bound by residues Gly114 and 134-139 (IGDFVL). Over residues 223–233 (RRDLLPEHSKN) the composition is skewed to basic and acidic residues. A disordered region spans residues 223–242 (RRDLLPEHSKNNPEQTNKLS).

Belongs to the RNA methyltransferase TrmD family. In terms of assembly, homodimer.

The protein localises to the cytoplasm. The catalysed reaction is guanosine(37) in tRNA + S-adenosyl-L-methionine = N(1)-methylguanosine(37) in tRNA + S-adenosyl-L-homocysteine + H(+). In terms of biological role, specifically methylates guanosine-37 in various tRNAs. This is tRNA (guanine-N(1)-)-methyltransferase from Rhodopirellula baltica (strain DSM 10527 / NCIMB 13988 / SH1).